A 260-amino-acid chain; its full sequence is Indole-3-glycerol phosphate synthase (260 aa).

Belongs to the TrpC family.

The enzyme catalyses 1-(2-carboxyphenylamino)-1-deoxy-D-ribulose 5-phosphate + H(+) = (1S,2R)-1-C-(indol-3-yl)glycerol 3-phosphate + CO2 + H2O. The protein operates within amino-acid biosynthesis; L-tryptophan biosynthesis; L-tryptophan from chorismate: step 4/5. The polypeptide is Indole-3-glycerol phosphate synthase (Staphylococcus aureus (strain COL)).